Here is a 373-residue protein sequence, read N- to C-terminus: 3 beta-hydroxysteroid dehydrogenase/Delta 5--&gt;4-isomerase type 1 (373 aa).

NADP(+)-binding positions include 10–15 (GAGGFV), Tyr155, and Lys159. Lys159 (proton donor) is an active-site residue. A helical transmembrane segment spans residues 288-308 (LPLLYWLAFLLETVSFLLRPF).

It belongs to the 3-beta-HSD family. Adrenal glands, kidney, testes and ovaries.

The protein localises to the endoplasmic reticulum membrane. It localises to the mitochondrion membrane. The catalysed reaction is a 3beta-hydroxy-Delta(5)-steroid + NAD(+) = a 3-oxo-Delta(5)-steroid + NADH + H(+). The enzyme catalyses pregnenolone + NAD(+) = pregn-5-ene-3,20-dione + NADH + H(+). It carries out the reaction 3beta-hydroxyandrost-5-en-17-one + NAD(+) = androst-5-ene-3,17-dione + NADH + H(+). It catalyses the reaction androst-5-en-3beta,17beta-diol + NAD(+) = 17beta-hydroxy-androst-5-en-3-one + NADH + H(+). The catalysed reaction is a 3beta-hydroxysteroid + NADP(+) = a 3-oxosteroid + NADPH + H(+). The enzyme catalyses 5alpha-androstane-3beta,17beta-diol + NADP(+) = 17beta-hydroxy-5alpha-androstan-3-one + NADPH + H(+). It carries out the reaction 3beta-hydroxy-5alpha-androstan-17-one + NADP(+) = 5alpha-androstan-3,17-dione + NADPH + H(+). It catalyses the reaction a 3-oxo-Delta(5)-steroid = a 3-oxo-Delta(4)-steroid. The catalysed reaction is pregn-5-ene-3,20-dione = progesterone. The enzyme catalyses androst-5-ene-3,17-dione = androst-4-ene-3,17-dione. It carries out the reaction 17beta-hydroxy-androst-5-en-3-one = testosterone. It catalyses the reaction 5alpha-androstane-3beta,17beta-diol + NAD(+) = 17beta-hydroxy-5alpha-androstan-3-one + NADH + H(+). Its pathway is steroid hormone biosynthesis. The protein operates within steroid metabolism. Functionally, a bifunctional enzyme responsible for the oxidation and isomerization of 3beta-hydroxy-Delta(5)-steroid precursors to 3-oxo-Delta(4)-steroids, an essential step in steroid hormone biosynthesis. Specifically catalyzes the conversion of pregnenolone to progesterone, dehydroepiandrosterone (DHEA) to 4-androstenedione, and androstenediol to testosterone. Additionally, catalyzes the interconversion between 3beta-hydroxy and 3-oxo-5alpha-androstane steroids controlling the bioavalability of the active forms. Specifically converts dihydrotestosterone to its inactive form 5alpha-androstanediol, that does not bind androgen receptor/AR. Also converts androstanedione, a precursor of testosterone and estrone, to epiandrosterone. Expected to use NAD(+) as preferred electron donor for the 3beta-hydroxy-steroid dehydrogenase activity and NADPH for the 3-ketosteroid reductase activity. The protein is 3 beta-hydroxysteroid dehydrogenase/Delta 5--&gt;4-isomerase type 1 of Rattus norvegicus (Rat).